A 232-amino-acid polypeptide reads, in one-letter code: Nucleoside diphosphate kinase 2, chloroplastic (232 aa).

A chloroplast-targeting transit peptide spans 1–79 (MGCLSVVGAS…TRIFLPHLVA (79 aa)). K92, F140, R168, T174, R185, and N195 together coordinate ATP. H198 acts as the Pros-phosphohistidine intermediate in catalysis.

It belongs to the NDK family. It depends on Mg(2+) as a cofactor.

Its subcellular location is the plastid. The protein resides in the chloroplast. It catalyses the reaction a 2'-deoxyribonucleoside 5'-diphosphate + ATP = a 2'-deoxyribonucleoside 5'-triphosphate + ADP. The enzyme catalyses a ribonucleoside 5'-diphosphate + ATP = a ribonucleoside 5'-triphosphate + ADP. Functionally, major role in the synthesis of nucleoside triphosphates other than ATP. The ATP gamma phosphate is transferred to the NDP beta phosphate via a ping-pong mechanism, using a phosphorylated active-site intermediate. This is Nucleoside diphosphate kinase 2, chloroplastic from Nicotiana tabacum (Common tobacco).